Consider the following 400-residue polypeptide: Enoyl-[acyl-carrier-protein] reductase [NADH] (400 aa).

NAD(+)-binding positions include 48–53 (GASSGY), 74–75 (FE), 111–112 (DA), and 139–140 (LA). Residue Y225 participates in substrate binding. Y235 functions as the Proton donor in the catalytic mechanism. NAD(+) contacts are provided by residues K244 and 273-275 (VVT).

This sequence belongs to the TER reductase family. Monomer.

The enzyme catalyses a 2,3-saturated acyl-[ACP] + NAD(+) = a (2E)-enoyl-[ACP] + NADH + H(+). Its pathway is lipid metabolism; fatty acid biosynthesis. Functionally, involved in the final reduction of the elongation cycle of fatty acid synthesis (FAS II). Catalyzes the reduction of a carbon-carbon double bond in an enoyl moiety that is covalently linked to an acyl carrier protein (ACP). The polypeptide is Enoyl-[acyl-carrier-protein] reductase [NADH] (Marinomonas sp. (strain MWYL1)).